The chain runs to 342 residues: Ferrochelatase (342 aa).

Residues His188 and Glu268 each coordinate Fe cation.

The protein belongs to the ferrochelatase family.

It is found in the cytoplasm. It catalyses the reaction heme b + 2 H(+) = protoporphyrin IX + Fe(2+). It participates in porphyrin-containing compound metabolism; protoheme biosynthesis; protoheme from protoporphyrin-IX: step 1/1. Its function is as follows. Catalyzes the ferrous insertion into protoporphyrin IX. This chain is Ferrochelatase, found in Rickettsia prowazekii (strain Madrid E).